The primary structure comprises 387 residues: MSKRDYYEVLGVAKTAGEAELKSAFRKLAMAYHPDRNPGDKEAEIKFKEVNEAYQTLSDDQKRAAYDRFGHAAFSQGGPGGPGFGADFGDFMSDIFDTFFGDARAGGAGPRGGGGRAGGRERGADLRYNLEISLEEAFTGKTETIRLPTSVTCEVCAGSGAKAGSKPRVCPTCGGYGRVRAAQGFFAIERTCPNCQGRGEIIDDPCAACGGAGRVTRERTLSVNVPAGVDDGLRIRLAGEGESGLRGGPAGDLYIFLSIKPHPFFQRDGADLFCRVPISMVTAALSGEITVPVIDGSHTTVRVPGGTQTNKQFRLKGKGMPVLRSRDVGDLYIQVFVETPQNLTKRQRELLQEFDQLGSQADNHPESAGFFSRVKEFFDGLSGSGRA.

In terms of domain architecture, J spans Asp-5–Gly-70. The segment at Gly-140–Glu-218 adopts a CR-type zinc-finger fold. Zn(2+) is bound by residues Cys-153, Cys-156, Cys-170, Cys-173, Cys-192, Cys-195, Cys-206, and Cys-209. CXXCXGXG motif repeat units lie at residues Cys-153–Gly-160, Cys-170–Gly-177, Cys-192–Gly-199, and Cys-206–Gly-213.

This sequence belongs to the DnaJ family. Homodimer. It depends on Zn(2+) as a cofactor.

The protein localises to the cytoplasm. Its function is as follows. Participates actively in the response to hyperosmotic and heat shock by preventing the aggregation of stress-denatured proteins and by disaggregating proteins, also in an autonomous, DnaK-independent fashion. Unfolded proteins bind initially to DnaJ; upon interaction with the DnaJ-bound protein, DnaK hydrolyzes its bound ATP, resulting in the formation of a stable complex. GrpE releases ADP from DnaK; ATP binding to DnaK triggers the release of the substrate protein, thus completing the reaction cycle. Several rounds of ATP-dependent interactions between DnaJ, DnaK and GrpE are required for fully efficient folding. Also involved, together with DnaK and GrpE, in the DNA replication of plasmids through activation of initiation proteins. This is Chaperone protein DnaJ from Methylobacterium sp. (strain 4-46).